The following is a 434-amino-acid chain: Cytochrome c biogenesis protein CcsB (434 aa).

3 helical membrane passes run 15–35 (LRVAIVLLLLIAACSGLGTAI), 73–93 (SNWFLLLLAWLGLALLLCSLR), and 163–183 (VGPLLVHTGLIVFMVGAVVGA).

The protein belongs to the Ccs1/CcsB family. As to quaternary structure, may interact with CcsA.

The protein resides in the cellular thylakoid membrane. Functionally, required during biogenesis of c-type cytochromes (cytochrome c6 and cytochrome f) at the step of heme attachment. This is Cytochrome c biogenesis protein CcsB from Synechococcus sp. (strain RCC307).